The following is a 257-amino-acid chain: Thiazole synthase (257 aa).

Lys96 (schiff-base intermediate with DXP) is an active-site residue. 1-deoxy-D-xylulose 5-phosphate-binding positions include Gly157, 184–185, and 206–207; these read AG and NT.

The protein belongs to the ThiG family. Homotetramer. Forms heterodimers with either ThiH or ThiS.

The protein resides in the cytoplasm. The enzyme catalyses [ThiS sulfur-carrier protein]-C-terminal-Gly-aminoethanethioate + 2-iminoacetate + 1-deoxy-D-xylulose 5-phosphate = [ThiS sulfur-carrier protein]-C-terminal Gly-Gly + 2-[(2R,5Z)-2-carboxy-4-methylthiazol-5(2H)-ylidene]ethyl phosphate + 2 H2O + H(+). It participates in cofactor biosynthesis; thiamine diphosphate biosynthesis. Its function is as follows. Catalyzes the rearrangement of 1-deoxy-D-xylulose 5-phosphate (DXP) to produce the thiazole phosphate moiety of thiamine. Sulfur is provided by the thiocarboxylate moiety of the carrier protein ThiS. In vitro, sulfur can be provided by H(2)S. This Bartonella quintana (strain Toulouse) (Rochalimaea quintana) protein is Thiazole synthase.